Consider the following 89-residue polypeptide: uncharacterized protein (89 aa).

Basic residues-rich tracts occupy residues 1-17 (MPPH…HGHH) and 65-89 (HHGH…HGHH). Disordered stretches follow at residues 1 to 25 (MPPH…ITPV) and 60 to 89 (LETG…HGHH).

This is an uncharacterized protein from Dictyostelium discoideum (Social amoeba).